A 254-amino-acid polypeptide reads, in one-letter code: tRNA (guanine-N(7)-)-methyltransferase (254 aa).

Positions 1-34 (MNTNTPAHPPEGAPLSEATQAALASAEHAPDSPG) are disordered. Positions 87, 112, 139, and 162 each coordinate S-adenosyl-L-methionine. Residue Asp-162 is part of the active site. Substrate contacts are provided by residues Lys-166, Asp-198, and 233-236 (TKFE).

Belongs to the class I-like SAM-binding methyltransferase superfamily. TrmB family.

It carries out the reaction guanosine(46) in tRNA + S-adenosyl-L-methionine = N(7)-methylguanosine(46) in tRNA + S-adenosyl-L-homocysteine. It functions in the pathway tRNA modification; N(7)-methylguanine-tRNA biosynthesis. In terms of biological role, catalyzes the formation of N(7)-methylguanine at position 46 (m7G46) in tRNA. The chain is tRNA (guanine-N(7)-)-methyltransferase from Bordetella bronchiseptica (strain ATCC BAA-588 / NCTC 13252 / RB50) (Alcaligenes bronchisepticus).